The primary structure comprises 270 residues: Regulator of G-protein signaling rgs-10 (270 aa).

The RGS domain occupies 135–252 (SPETLAASEY…LEDPLYLDLV (118 aa)).

Its function is as follows. Shown to have a role in viability and embryogenesis. The chain is Regulator of G-protein signaling rgs-10 (rgs-10) from Caenorhabditis elegans.